The following is a 158-amino-acid chain: Osmosensory protein A (158 aa).

Threonine 2 bears the Phosphothreonine; by PknD mark. The region spanning 28-139 (AQIRAYLHHL…RSVHKALHDL (112 aa)) is the STAS domain.

Belongs to the anti-sigma-factor antagonist family. As to quaternary structure, interacts with Rv2638. Phosphorylation abolishes binding to Rv2638. Post-translationally, phosphorylated on Thr-2 by the serine/threonine-protein kinase PknD. Also phosphorylated to a lesser extent by PknB and PknE. Dephosphorylated by PstP.

Its activity is regulated as follows. Regulated by PknD under osmotic stress. In terms of biological role, part of a signaling pathway that enables adaptation to osmotic stress through cell wall remodeling and virulence factor production. Unphosphorylated OprA forms a complex with the anti-anti-sigma-factor paralog Rv2638 that dissociates on OprA phosphorylation by PknD. Phosphorylation of OprA may stimulate the release of SigF from an inhibitory complex and enable the transcription of osmotically regulated genes, such as oprA and the ESX-1-associated virulence factor espA. The protein is Osmosensory protein A of Mycobacterium tuberculosis (strain ATCC 25618 / H37Rv).